The chain runs to 348 residues: MTIAPEGRRMLRVEARNSQTPIETKPRWIRNQVKNGPEYKDMKERVAGASLHTVCQEAGCPNIHECWESREATFLIGGANCSRRCDFCMINSARPEPLDRGEPLRVAESVREMRLNYSTITGVTRDDLPDEGAWLYSEVVRKIHELNPNTGVENLVPDFSGKRDLLQEVFESRPEVFAHNLETVPRIFKRIRPAFRYDRSLDVIRQARDFGLVTKSNLILGMGETREEISEALRDLHSAGTDIITITQYLRPGPLFHPIERWVKPEEFLELSDEAYEIGFAAVMSGPLVRSSYRAGKLYAQALKFRGEELPANLSHLAETTEGPTTQEASSLLERYGASEDAPVIPRG.

[4Fe-4S] cluster-binding residues include cysteine 55, cysteine 60, cysteine 66, cysteine 81, cysteine 85, cysteine 88, and serine 292. One can recognise a Radical SAM core domain in the interval 67–281 (WESREATFLI…SDEAYEIGFA (215 aa)).

This sequence belongs to the radical SAM superfamily. Lipoyl synthase family. The cofactor is [4Fe-4S] cluster.

The protein resides in the cytoplasm. It carries out the reaction [[Fe-S] cluster scaffold protein carrying a second [4Fe-4S](2+) cluster] + N(6)-octanoyl-L-lysyl-[protein] + 2 oxidized [2Fe-2S]-[ferredoxin] + 2 S-adenosyl-L-methionine + 4 H(+) = [[Fe-S] cluster scaffold protein] + N(6)-[(R)-dihydrolipoyl]-L-lysyl-[protein] + 4 Fe(3+) + 2 hydrogen sulfide + 2 5'-deoxyadenosine + 2 L-methionine + 2 reduced [2Fe-2S]-[ferredoxin]. The protein operates within protein modification; protein lipoylation via endogenous pathway; protein N(6)-(lipoyl)lysine from octanoyl-[acyl-carrier-protein]: step 2/2. In terms of biological role, catalyzes the radical-mediated insertion of two sulfur atoms into the C-6 and C-8 positions of the octanoyl moiety bound to the lipoyl domains of lipoate-dependent enzymes, thereby converting the octanoylated domains into lipoylated derivatives. This is Lipoyl synthase from Corynebacterium efficiens (strain DSM 44549 / YS-314 / AJ 12310 / JCM 11189 / NBRC 100395).